Reading from the N-terminus, the 128-residue chain is 3-aminoacrylate deaminase RutC (128 aa).

This sequence belongs to the RutC family.

It catalyses the reaction (Z)-3-aminoacrylate + H2O + H(+) = 3-oxopropanoate + NH4(+). In terms of biological role, involved in pyrimidine catabolism. Catalyzes the deamination of 3-aminoacrylate to malonic semialdehyde, a reaction that can also occur spontaneously. RutC may facilitate the reaction and modulate the metabolic fitness, rather than catalyzing essential functions. The polypeptide is 3-aminoacrylate deaminase RutC (Azorhizobium caulinodans (strain ATCC 43989 / DSM 5975 / JCM 20966 / LMG 6465 / NBRC 14845 / NCIMB 13405 / ORS 571)).